The following is a 369-amino-acid chain: Protein RecA (369 aa).

Gly66–Thr73 is an ATP binding site. The interval Gly328–Lys369 is disordered. Positions Asp339 to Lys369 are enriched in basic and acidic residues.

This sequence belongs to the RecA family.

It localises to the cytoplasm. Can catalyze the hydrolysis of ATP in the presence of single-stranded DNA, the ATP-dependent uptake of single-stranded DNA by duplex DNA, and the ATP-dependent hybridization of homologous single-stranded DNAs. It interacts with LexA causing its activation and leading to its autocatalytic cleavage. This Lactobacillus delbrueckii subsp. bulgaricus (strain ATCC BAA-365 / Lb-18) protein is Protein RecA.